Consider the following 273-residue polypeptide: Dermonecrotic toxin (273 aa).

Residues Glu-20 and Asp-22 each coordinate Mg(2+). The active-site Nucleophile is His-35. Cys-39 and Cys-45 form a disulfide bridge. Asp-79 lines the Mg(2+) pocket.

It belongs to the arthropod phospholipase D family. Class I subfamily. Mg(2+) is required as a cofactor. In terms of tissue distribution, expressed by the venom gland.

Its subcellular location is the secreted. The enzyme catalyses an N-(acyl)-sphingosylphosphocholine = an N-(acyl)-sphingosyl-1,3-cyclic phosphate + choline. It carries out the reaction an N-(acyl)-sphingosylphosphoethanolamine = an N-(acyl)-sphingosyl-1,3-cyclic phosphate + ethanolamine. The catalysed reaction is a 1-acyl-sn-glycero-3-phosphocholine = a 1-acyl-sn-glycero-2,3-cyclic phosphate + choline. It catalyses the reaction a 1-acyl-sn-glycero-3-phosphoethanolamine = a 1-acyl-sn-glycero-2,3-cyclic phosphate + ethanolamine. Its function is as follows. Dermonecrotic toxins cleave the phosphodiester linkage between the phosphate and headgroup of certain phospholipids (sphingolipid and lysolipid substrates), forming an alcohol (often choline) and a cyclic phosphate. This toxin acts on sphingomyelin (SM). It may also act on ceramide phosphoethanolamine (CPE), lysophosphatidylcholine (LPC) and lysophosphatidylethanolamine (LPE), but not on lysophosphatidylserine (LPS), and lysophosphatidylglycerol (LPG). It acts by transphosphatidylation, releasing exclusively cyclic phosphate products as second products. Induces dermonecrosis, hemolysis, increased vascular permeability, edema, inflammatory response, and platelet aggregation. The polypeptide is Dermonecrotic toxin (Loxosceles laeta (South American recluse spider)).